A 472-amino-acid chain; its full sequence is 3-isopropylmalate dehydratase large subunit (472 aa).

3 residues coordinate [4Fe-4S] cluster: Cys-353, Cys-414, and Cys-417.

It belongs to the aconitase/IPM isomerase family. LeuC type 1 subfamily. As to quaternary structure, heterodimer of LeuC and LeuD. It depends on [4Fe-4S] cluster as a cofactor.

The enzyme catalyses (2R,3S)-3-isopropylmalate = (2S)-2-isopropylmalate. The protein operates within amino-acid biosynthesis; L-leucine biosynthesis; L-leucine from 3-methyl-2-oxobutanoate: step 2/4. Functionally, catalyzes the isomerization between 2-isopropylmalate and 3-isopropylmalate, via the formation of 2-isopropylmaleate. The polypeptide is 3-isopropylmalate dehydratase large subunit (Psychrobacter cryohalolentis (strain ATCC BAA-1226 / DSM 17306 / VKM B-2378 / K5)).